The primary structure comprises 400 residues: S-adenosylmethionine synthase (400 aa).

Histidine 17 provides a ligand contact to ATP. Position 19 (aspartate 19) interacts with Mg(2+). Residue glutamate 45 coordinates K(+). Positions 58 and 101 each coordinate L-methionine. Residues 101–111 form a flexible loop region; that stretch reads QSPDIAMGVDQ. Residues 177-179, 244-245, aspartate 253, 259-260, alanine 276, and lysine 280 contribute to the ATP site; these read DGK, RF, and RK. Residue aspartate 253 participates in L-methionine binding. Lysine 284 is a binding site for L-methionine.

It belongs to the AdoMet synthase family. As to quaternary structure, homotetramer; dimer of dimers. Mg(2+) serves as cofactor. Requires K(+) as cofactor.

It localises to the cytoplasm. It carries out the reaction L-methionine + ATP + H2O = S-adenosyl-L-methionine + phosphate + diphosphate. It functions in the pathway amino-acid biosynthesis; S-adenosyl-L-methionine biosynthesis; S-adenosyl-L-methionine from L-methionine: step 1/1. Catalyzes the formation of S-adenosylmethionine (AdoMet) from methionine and ATP. The overall synthetic reaction is composed of two sequential steps, AdoMet formation and the subsequent tripolyphosphate hydrolysis which occurs prior to release of AdoMet from the enzyme. The polypeptide is S-adenosylmethionine synthase (Bacillus licheniformis (strain ATCC 14580 / DSM 13 / JCM 2505 / CCUG 7422 / NBRC 12200 / NCIMB 9375 / NCTC 10341 / NRRL NRS-1264 / Gibson 46)).